The sequence spans 1298 residues: Outer capsid protein VP1 (1298 aa).

It belongs to the aquareoviridae outer capsid VP1 protein family.

The protein localises to the virion. It catalyses the reaction a 5'-end diphospho-ribonucleoside in mRNA + GTP + H(+) = a 5'-end (5'-triphosphoguanosine)-ribonucleoside in mRNA + diphosphate. The catalysed reaction is a 5'-end (5'-triphosphoguanosine)-ribonucleoside in mRNA + S-adenosyl-L-methionine = a 5'-end (N(7)-methyl 5'-triphosphoguanosine)-ribonucleoside in mRNA + S-adenosyl-L-homocysteine. In terms of biological role, outer capsid protein involved in mRNA capping. Catalyzes the last 3 enzymatic activities for formation of the 5' cap structure on the viral plus-strand transcripts, namely the RNA guanylyltransferase, RNA-7N- and RNA-2'O-methyltransferase activities. The protein is Outer capsid protein VP1 (S1) of Ctenopharyngodon idella (Grass carp).